Consider the following 110-residue polypeptide: Insulin (110 aa).

The first 24 residues, 1–24 (MALWMRLLPLLALLALWGPDPAQA), serve as a signal peptide directing secretion. Disulfide bonds link Cys-31/Cys-96, Cys-43/Cys-109, and Cys-95/Cys-100. Residues 57-87 (EAEDLQVGQVELGGGPGAGSLQPLALEGSLQ) constitute a propeptide, c peptide.

The protein belongs to the insulin family. As to quaternary structure, heterodimer of a B chain and an A chain linked by two disulfide bonds.

It is found in the secreted. In terms of biological role, insulin decreases blood glucose concentration. It increases cell permeability to monosaccharides, amino acids and fatty acids. It accelerates glycolysis, the pentose phosphate cycle, and glycogen synthesis in liver. The polypeptide is Insulin (INS) (Pongo pygmaeus (Bornean orangutan)).